We begin with the raw amino-acid sequence, 71 residues long: Small ribosomal subunit protein bS21 (71 aa).

Belongs to the bacterial ribosomal protein bS21 family.

This is Small ribosomal subunit protein bS21 from Chromohalobacter salexigens (strain ATCC BAA-138 / DSM 3043 / CIP 106854 / NCIMB 13768 / 1H11).